Here is a 1208-residue protein sequence, read N- to C-terminus: Lysine-specific demethylase JMJ17 (1208 aa).

The PHD-type 1; degenerate zinc finger occupies 1–36; that stretch reads MLLCDSCNKGWHIYCLSPPLKHIPLGNWYCLECLNT. Zn(2+) contacts are provided by cysteine 4, cysteine 7, cysteine 30, and cysteine 33. The JmjC domain maps to 126-292; it reads EYCGSPWNLN…YGGSGAELYR (167 aa). Positions 172, 174, and 260 each coordinate Fe cation. The Zn(2+) site is built by cysteine 369, cysteine 372, cysteine 383, cysteine 385, cysteine 392, histidine 395, cysteine 400, and cysteine 402. The segment at 369–421 adopts a C5HC2 zinc-finger fold; it reads CIICQQFLHLSAIVCNCRPSVFACLEHWKHLCECEPTKLRLEYRYTLAELDMM. A Nuclear localization signal motif is present at residues 613-620; the sequence is SKKISSAK. The PHD-type 2 zinc-finger motif lies at 1099-1145; the sequence is MLHCICLKPYNSRSMVSCSQCGEWYHTYCLKLHWRPKAYVCSACCPL. Positions 1102, 1104, 1116, 1119, 1124, 1127, 1139, and 1142 each coordinate Zn(2+).

The protein belongs to the JARID1 histone demethylase family. It depends on Fe(2+) as a cofactor. As to expression, expressed in inflorescences, roots, seedlings and siliques, and, at low levels, in leaves and stems.

Its subcellular location is the nucleus. It carries out the reaction N(6),N(6),N(6)-trimethyl-L-lysyl(4)-[histone H3] + 2-oxoglutarate + O2 = N(6),N(6)-dimethyl-L-lysyl(4)-[histone H3] + formaldehyde + succinate + CO2. It catalyses the reaction N(6),N(6)-dimethyl-L-lysyl(4)-[histone H3] + 2-oxoglutarate + O2 = N(6)-methyl-L-lysyl(4)-[histone H3] + formaldehyde + succinate + CO2. The catalysed reaction is N(6)-methyl-L-lysyl(4)-[histone H3] + 2-oxoglutarate + O2 = L-lysyl(4)-[histone H3] + formaldehyde + succinate + CO2. The enzyme catalyses N(6),N(6),N(6)-trimethyl-L-lysyl(4)-[histone H3] + 3 2-oxoglutarate + 3 O2 = L-lysyl(4)-[histone H3] + 3 formaldehyde + 3 succinate + 3 CO2. Its function is as follows. Functions as a histone H3 'Lys-4' (H3K4me) demethylase involved in the regulation of gene expression. Active on H3K4me1, H3K4me2 and H3K4me3. Repressor of the abscisic acid (ABA) signaling pathway, especially during stomatal closure regulation. Negative regulator of responses to dehydration stress by binding directly to the chromatin of SRK2E/OST1 and demethylating H3K4me3 to regulates its expression. Together with JMJ14 and JMJ16, required for plant growth and development. The polypeptide is Lysine-specific demethylase JMJ17 (Arabidopsis thaliana (Mouse-ear cress)).